Here is a 228-residue protein sequence, read N- to C-terminus: 5'(3')-deoxyribonucleotidase, mitochondrial (228 aa).

A mitochondrion-targeting transit peptide spans 1–31; the sequence is MIRLGGWCARRLCSAAVPAGRRGAAGGLGLA. The active-site Nucleophile is Asp-41. Mg(2+)-binding residues include Asp-41 and Asp-43. The active-site Proton donor is the Asp-43. Residues Asp-43, Phe-49, Phe-75, Trp-76, Val-77, Trp-96, Thr-130, and Lys-165 each coordinate substrate. Asp-176 contributes to the Mg(2+) binding site.

The protein belongs to the 5'(3')-deoxyribonucleotidase family. In terms of assembly, homodimer. It depends on Mg(2+) as a cofactor. Highly expressed in heart, brain and skeletal muscle. Detected at very low levels in kidney and pancreas.

It localises to the mitochondrion. Functionally, dephosphorylates specifically the 5' and 2'(3')-phosphates of uracil and thymine deoxyribonucleotides, and so protects mitochondrial DNA replication from excess dTTP. Has only marginal activity towards dIMP and dGMP. The sequence is that of 5'(3')-deoxyribonucleotidase, mitochondrial (NT5M) from Homo sapiens (Human).